A 171-amino-acid polypeptide reads, in one-letter code: Co-chaperone protein HscB (171 aa).

Positions 2-74 (DYFTLFGLPA…LARAEYLLSL (73 aa)) constitute a J domain.

It belongs to the HscB family. As to quaternary structure, interacts with HscA and stimulates its ATPase activity. Interacts with IscU.

Its function is as follows. Co-chaperone involved in the maturation of iron-sulfur cluster-containing proteins. Seems to help targeting proteins to be folded toward HscA. The polypeptide is Co-chaperone protein HscB (Enterobacter sp. (strain 638)).